Reading from the N-terminus, the 327-residue chain is Asnovolin J 5',6'-dehydrogenase nvfM (327 aa).

A helical membrane pass occupies residues 9 to 29 (VAIVGASGVTGGSIVNGLLAL). Residues 13–19 (GASGVTG) and K47 each bind NADP(+). K130 functions as the Proton acceptor in the catalytic mechanism.

The protein belongs to the NmrA-type oxidoreductase family.

It is found in the membrane. It carries out the reaction asnovolin K + AH2 = asnovolin A + A. The enzyme catalyses chermesin D methyl ester + AH2 = asnovolin J + A. The protein operates within secondary metabolite biosynthesis; terpenoid biosynthesis. In terms of biological role, asnovolin J 5',6'-dehydrogenase; part of the gene cluster that mediates the biosynthesis of novofumigatonin, a heavily oxygenated meroterpenoid containing a unique orthoester moiety. The first step of the pathway is the synthesis of 3,5-dimethylorsellinic acid (DMOA) by the polyketide synthase nvfA via condensation of one acetyl-CoA starter unit with 3 malonyl-CoA units and 2 methylations. DMOA is then converted to farnesyl-DMOA by the farnesyltransferase nvfB. Epoxydation by FAD-dependent monooxygenase nvfK, followed by a protonation-initiated cyclization catalyzed by the terpene cyclase nvfL leads to the production of asnavolin H. The short chain dehydrogenase nvfC then as a 3-OH dehydrogenase of asnovolin H to yield chemesin D. There are two branches to synthesize asnovolin A from chemesin D. In one branch, chemesin D undergoes Baeyer-Villiger oxidation by nvfH, methylation by nvfJ, and enoyl reduction by the nvfM D enoylreductase that reduces the double bond between C-5'and C-6', to form respectively asnovolin I, asnovolin K, and asnovolin A. In the other branch, the methylation precedes the Baeyer-Villiger oxidation and the enoyl reduction to yield asnovolin A via the asnovolin J intermediate. Asnovolin A is further converted to fumigatonoid A by the Fe(II)/2-oxoglutarate-dependent dioxygenase nvfI that catalyzes an endoperoxidation reaction. The alpha/beta hydrolase nvfD then acts as an epimerase that converts fumigatonoid A to its C-5' epimer, which then undergoes spontaneous or nvfD-catalyzed lactonization. The following step utilizes the ketoreductase nvfG to produce fumigatonoid B. The dioxygenase nvfE further converts fumigatonoid B into fumigatonoid C. Finally the Fe(II)/2-oxoglutarate-dependent dioxygenase nvfF catalyzes two rounds of oxidation to transform fumigatonoid C into the end product, novofumigatonin A. This Aspergillus novofumigatus (strain IBT 16806) protein is Asnovolin J 5',6'-dehydrogenase nvfM.